An 87-amino-acid polypeptide reads, in one-letter code: Translation initiation factor IF-1 2 (87 aa).

In terms of domain architecture, S1-like spans 1-72 (MAADDHIEME…TKGRIARRTT (72 aa)). The tract at residues 65-87 (GRIARRTTTPSGGPRPARSGNRR) is disordered.

Belongs to the IF-1 family. As to quaternary structure, component of the 30S ribosomal translation pre-initiation complex which assembles on the 30S ribosome in the order IF-2 and IF-3, IF-1 and N-formylmethionyl-tRNA(fMet); mRNA recruitment can occur at any time during PIC assembly.

It is found in the cytoplasm. Its function is as follows. One of the essential components for the initiation of protein synthesis. Stabilizes the binding of IF-2 and IF-3 on the 30S subunit to which N-formylmethionyl-tRNA(fMet) subsequently binds. Helps modulate mRNA selection, yielding the 30S pre-initiation complex (PIC). Upon addition of the 50S ribosomal subunit IF-1, IF-2 and IF-3 are released leaving the mature 70S translation initiation complex. The protein is Translation initiation factor IF-1 2 of Nitratidesulfovibrio vulgaris (strain ATCC 29579 / DSM 644 / CCUG 34227 / NCIMB 8303 / VKM B-1760 / Hildenborough) (Desulfovibrio vulgaris).